Reading from the N-terminus, the 405-residue chain is Indoleamine 2,3-dioxygenase 2 (405 aa).

His347 lines the heme pocket.

The protein belongs to the indoleamine 2,3-dioxygenase family. The cofactor is heme. As to expression, expressed mainly in antigen-presenting immune cells, liver, kidney, brain, and placenta. Highly expressed in kidney, followed by epididymis and liver (at protein level). Detected in the tails of the spermatozoa in the testis and in the kidney tubules (at protein level). Constitutively expressed in brain.

It catalyses the reaction L-tryptophan + O2 = N-formyl-L-kynurenine. Its pathway is amino-acid degradation; L-tryptophan degradation via kynurenine pathway; L-kynurenine from L-tryptophan: step 1/2. With respect to regulation, activity is inhibited by D-1MT (1-methyl-D-tryptophan) and MTH-trp (methylthiohydantoin-DL-tryptophan) but not L-1MT (1-methyl-L-tryptophan). Catalyzes the first and rate-limiting step in the kynurenine pathway of tryptophan catabolism. Involved in immune regulation. The polypeptide is Indoleamine 2,3-dioxygenase 2 (Mus musculus (Mouse)).